The primary structure comprises 296 residues: Homoserine kinase (296 aa).

ATP is bound at residue proline 85 to alanine 95.

The protein belongs to the GHMP kinase family. Homoserine kinase subfamily.

Its subcellular location is the cytoplasm. It carries out the reaction L-homoserine + ATP = O-phospho-L-homoserine + ADP + H(+). The protein operates within amino-acid biosynthesis; L-threonine biosynthesis; L-threonine from L-aspartate: step 4/5. In terms of biological role, catalyzes the ATP-dependent phosphorylation of L-homoserine to L-homoserine phosphate. The chain is Homoserine kinase from Clostridium acetobutylicum (strain ATCC 824 / DSM 792 / JCM 1419 / IAM 19013 / LMG 5710 / NBRC 13948 / NRRL B-527 / VKM B-1787 / 2291 / W).